The chain runs to 346 residues: Serine/threonine-protein phosphatase PP1(5.9) (346 aa).

Mn(2+) contacts are provided by Asp-102, His-104, Asp-130, and Asn-162. The active-site Proton donor is the His-163. Positions 211 and 287 each coordinate Mn(2+).

The protein belongs to the PPP phosphatase family. PP-1 subfamily. It depends on Mn(2+) as a cofactor.

The enzyme catalyses O-phospho-L-seryl-[protein] + H2O = L-seryl-[protein] + phosphate. The catalysed reaction is O-phospho-L-threonyl-[protein] + H2O = L-threonyl-[protein] + phosphate. The chain is Serine/threonine-protein phosphatase PP1(5.9) from Trypanosoma brucei brucei.